A 379-amino-acid chain; its full sequence is Probable malonyl-CoA-acyl carrier protein transacylase, mitochondrial (379 aa).

The N-terminal 23 residues, 1-23, are a transit peptide targeting the mitochondrion; it reads MLAARRLLRSPRITGALSWSRWS. Residues S158 and H275 contribute to the active site.

It belongs to the type II malonyltransferase family.

It localises to the mitochondrion. It catalyses the reaction holo-[ACP] + malonyl-CoA = malonyl-[ACP] + CoA. It functions in the pathway lipid metabolism; fatty acid biosynthesis. Its function is as follows. Catalyzes the transfer of a malonyl moiety from malonyl-CoA to the free thiol group of the phosphopantetheine arm of the ACP protein. This suggests the existence of the biosynthesis of fatty acids in mitochondria. In Drosophila melanogaster (Fruit fly), this protein is Probable malonyl-CoA-acyl carrier protein transacylase, mitochondrial.